Reading from the N-terminus, the 239-residue chain is Large ribosomal subunit protein uL3 (239 aa).

2 disordered regions span residues 140-166 and 211-239; these read SHRS…PGHM and PLPK…QEGA. Q151 carries the post-translational modification N5-methylglutamine.

This sequence belongs to the universal ribosomal protein uL3 family. Part of the 50S ribosomal subunit. Forms a cluster with proteins L14 and L19. Methylated by PrmB.

Its function is as follows. One of the primary rRNA binding proteins, it binds directly near the 3'-end of the 23S rRNA, where it nucleates assembly of the 50S subunit. The protein is Large ribosomal subunit protein uL3 of Bradyrhizobium sp. (strain BTAi1 / ATCC BAA-1182).